Reading from the N-terminus, the 895-residue chain is ABC-transporter-regulating transcription factor (895 aa).

The zn(2)-C6 fungal-type DNA-binding region spans 69-96 (CDMCRKKKIKCDGKMPKCSHCTNYKTDC). The disordered stretch occupies residues 156–218 (HASGSNTPHN…QKESETEVEG (63 aa)). Over residues 158-207 (SGSNTPHNPQKINIPSQSQIAMSQQNSSSHYSTPRLESQSSPRTAATSPE) the composition is skewed to polar residues. The chain crosses the membrane as a helical span at residues 648-668 (CVWLILYYPVSALVTLFANIL). Residues 726–813 (ESYSKKKRKS…TGVSTNIPPN (88 aa)) are disordered. The span at 755 to 765 (PSTTQPTQAPS) shows a compositional bias: low complexity.

Interacts with ncaA.

The protein localises to the nucleus. Its subcellular location is the membrane. In terms of biological role, transcription factor that regulates expression of the genes related to ergosterol biosynthesis, including erg3B, erg24A, erg25A, as well as cyp51A that encodes a target protein of azoles. In coordination with ffmA and ncaA, is responsible for the expression of the ABC transporter abcC/cdr1B/abcG1 related to azole resistance. Directly binds both the cyp51A and abcC/cdr1B/abcG1 promoters at a conserved 34 bp region called the atrR response element (ATRE). AtrR also binds to the promoter regions of both the sterol response transcription factor srbA and atrR genes themselves, the latter suggesting the possibility that atrR is autoregulated. Also regulates iron uptake, most likely via cooperation with SrbA. AtrR is necessary for hypoxia adaptation and virulence. The protein is ABC-transporter-regulating transcription factor of Aspergillus fumigatus (strain ATCC MYA-4609 / CBS 101355 / FGSC A1100 / Af293) (Neosartorya fumigata).